The chain runs to 307 residues: N-acetylmuramic acid 6-phosphate etherase (307 aa).

In terms of domain architecture, SIS spans 62-225; that stretch reads IVAAFQKGGR…TTASMIRIGK (164 aa). The active-site Proton donor is E90. The active site involves E121.

The protein belongs to the GCKR-like family. MurNAc-6-P etherase subfamily. In terms of assembly, homodimer.

The enzyme catalyses N-acetyl-D-muramate 6-phosphate + H2O = N-acetyl-D-glucosamine 6-phosphate + (R)-lactate. Its pathway is amino-sugar metabolism; 1,6-anhydro-N-acetylmuramate degradation. It functions in the pathway amino-sugar metabolism; N-acetylmuramate degradation. It participates in cell wall biogenesis; peptidoglycan recycling. Functionally, specifically catalyzes the cleavage of the D-lactyl ether substituent of MurNAc 6-phosphate, producing GlcNAc 6-phosphate and D-lactate. Together with AnmK, is also required for the utilization of anhydro-N-acetylmuramic acid (anhMurNAc) either imported from the medium or derived from its own cell wall murein, and thus plays a role in cell wall recycling. The protein is N-acetylmuramic acid 6-phosphate etherase of Rhizobium rhizogenes (strain K84 / ATCC BAA-868) (Agrobacterium radiobacter).